The primary structure comprises 691 residues: MIDRYKHQQLRIGLVSPEQISAWATKILPNGEIVGEVTKPSILHYKTNKAEKGGLFCERIFGPQKSGICACGNYRVIGDEKEDPKFCEQCGVEFVDSRIRRYQMGYIKLACPVTHVWYLKRLPSYIANLLDKPLKELEGLVYRDFSFARPITKKPTFLRLRGLFEYEIKSWKYSIPLFFTIQGFDTFRNREISTGAGAIREQLVDLDLRIILDNSLVEWKELGEEGPTGNEWEDQKVRRRRGFLVRRMELAKHFIRTNIEPEWMVLCLLPVLPPDLRPVIQIAEGKVMSSDITKLYQRVIYRNKILTDLLTRSVSTPGDLVTSQEKLVQEAVDALLDNGTRGQPMRDGQNKVYKSLSDIIEGKEGRFRQTLLGKRVDYSGRSVIVVGPSLSLYRCGLPREIAIELFQTFVIRGLIRQDPASNIKVAKSQIREKEPIVWEILQEVMQGHPVLLNRAPTLHRLGIQAFQPVLVEGRAICLHPLVCKGFNADFDGDQMAVHVPLSLEAQAEARLLMFSHMNLLSPAIGDPISIPTQDMLVGLYVLTSGNRRGICVNRYNPWNHRNYENQRSKNNNYRYTKEPLFSNSYDAIGAYRQKRIKLDSPLWLRWPLDQRVIASRESPIEVHYESLGTYYEIYGHYLIVRSIKKEILFLYIRTTVGHISLYREIEEAIEGFSQACSSSYGTYTKLSNSRI.

Residues cysteine 69, cysteine 71, cysteine 87, and cysteine 90 each contribute to the Zn(2+) site. The Mg(2+) site is built by aspartate 489, aspartate 491, and aspartate 493.

The protein belongs to the RNA polymerase beta' chain family. RpoC1 subfamily. In terms of assembly, in plastids the minimal PEP RNA polymerase catalytic core is composed of four subunits: alpha, beta, beta', and beta''. When a (nuclear-encoded) sigma factor is associated with the core the holoenzyme is formed, which can initiate transcription. Mg(2+) is required as a cofactor. The cofactor is Zn(2+).

It is found in the plastid. Its subcellular location is the chloroplast. It catalyses the reaction RNA(n) + a ribonucleoside 5'-triphosphate = RNA(n+1) + diphosphate. Its function is as follows. DNA-dependent RNA polymerase catalyzes the transcription of DNA into RNA using the four ribonucleoside triphosphates as substrates. This Jasminum nudiflorum (Winter jasmine) protein is DNA-directed RNA polymerase subunit beta'.